Reading from the N-terminus, the 162-residue chain is Lipoprotein signal peptidase (162 aa).

Transmembrane regions (helical) follow at residues 56-76 (FLPPTGLLFLTLAISAGVVWY) and 84-104 (SPLFLTAFGLILGGGIGNLID). Residues Asp-113 and Asp-139 contribute to the active site. The chain crosses the membrane as a helical span at residues 132–152 (WPIFNVADSCITIGACMIVLF).

This sequence belongs to the peptidase A8 family.

It localises to the cell inner membrane. The enzyme catalyses Release of signal peptides from bacterial membrane prolipoproteins. Hydrolyzes -Xaa-Yaa-Zaa-|-(S,diacylglyceryl)Cys-, in which Xaa is hydrophobic (preferably Leu), and Yaa (Ala or Ser) and Zaa (Gly or Ala) have small, neutral side chains.. The protein operates within protein modification; lipoprotein biosynthesis (signal peptide cleavage). Its function is as follows. This protein specifically catalyzes the removal of signal peptides from prolipoproteins. The polypeptide is Lipoprotein signal peptidase (Chlorobaculum tepidum (strain ATCC 49652 / DSM 12025 / NBRC 103806 / TLS) (Chlorobium tepidum)).